The primary structure comprises 1401 residues: Lysine-specific demethylase 6A (1401 aa).

Residues 1–1095 are interaction with SUPT6H; it reads MKSCGVSLAT…TNIDLSDDKK (1095 aa). TPR repeat units follow at residues 93–126, 130–163, 170–199, 205–238, 250–283, 284–317, 318–351, and 352–385; these read SDFFCQLGHFNLLLEDYPKALSAYQRYYSLQSDY, AAFLYGLGLVYFHYNAFQWAIKAFQEVLYVDPSF, HLRLGLMFKVNTDYESSLKHFQLALVDCNP, AEIQFHIAHLYETQRKYHSAKEAYEQLLQTENLS, GWMHHTVDLLGDKATKESYAIQYLQKSLEADPNS, GQSWYFLGRCYSSIGKVQDAFISYRQSIDKSEAS, ADTWCSIGVLYQQQNQPMDALQAYICAVQLDHGH, and AAAWMDLGTLYESCNQPQDAIKCYLNATRSKSCS. Residues 437–449 show a composition bias toward polar residues; it reads AMNTAQQNTSDNW. The interval 437 to 457 is disordered; it reads AMNTAQQNTSDNWSGGHAVSH. Arg519 carries the post-translational modification Omega-N-methylarginine. A disordered region spans residues 521 to 541; sequence TGIPNGPTADSSLPTNSVSGQ. Residue Arg549 is modified to Omega-N-methylarginine. Composition is skewed to polar residues over residues 624-652 and 660-724; these read LTSSAEEPWKNQLSNSTQGLHKGQSSHSA and LSST…SGNI. Disordered stretches follow at residues 624–746, 758–778, 810–864, 914–940, and 1043–1079; these read LTSS…SVEG, AVCSPSHGDSKSPGLLSSDNP, KTDN…ESQS, LLDKCPPPRPPSSPYPPLPKDKLNPPT, and FQESLREENEKRSHHKDHSDSESTSSDNSGRRRKGPF. Ser769 carries the post-translational modification Phosphoserine. A compositionally biased stretch (low complexity) spans 814–833; that stretch reads SVASSPSSAISTATPSPKST. Residue Thr827 is modified to Phosphothreonine. Ser829 is subject to Phosphoserine. Residues 834 to 848 show a composition bias toward polar residues; the sequence is EQTTTNSVTSLNSPH. A compositionally biased stretch (pro residues) spans 918–931; that stretch reads CPPPRPPSSPYPPL. The segment covering 1046-1063 has biased composition (basic and acidic residues); it reads SLREENEKRSHHKDHSDS. In terms of domain architecture, JmjC spans 1095-1258; the sequence is KWKLQLHELT…YKLAVERYEW (164 aa). 3 residues coordinate Fe cation: His1146, Glu1148, and His1226. Residues Cys1331, Cys1334, Cys1358, and Cys1361 each coordinate Zn(2+).

This sequence belongs to the UTX family. Interacts with TLE1. Component of the MLL2/3 complex (also named ASCOM complex), at least composed of KMT2D/MLL2 or KMT2C/MLL3, ASH2L, RBBP5, WDR5, NCOA6, DPY30, KDM6A (or KDM6B), PAXIP1/PTIP, PAGR1 and alpha- and beta-tubulin. Interacts with SUPT6H. Interacts with SMARCA4. Interacts with PROSER1. L-ascorbate is required as a cofactor. Requires Fe(2+) as cofactor.

It localises to the nucleus. It catalyses the reaction N(6),N(6),N(6)-trimethyl-L-lysyl(27)-[histone H3] + 2 2-oxoglutarate + 2 O2 = N(6)-methyl-L-lysyl(27)-[histone H3] + 2 formaldehyde + 2 succinate + 2 CO2. In terms of biological role, histone demethylase that specifically demethylates 'Lys-27' of histone H3, thereby playing a central role in histone code. Demethylates trimethylated and dimethylated but not monomethylated H3 'Lys-27'. Plays a central role in regulation of posterior development, by regulating HOX gene expression. Demethylation of 'Lys-27' of histone H3 is concomitant with methylation of 'Lys-4' of histone H3, and regulates the recruitment of the PRC1 complex and monoubiquitination of histone H2A. Plays a demethylase-independent role in chromatin remodeling to regulate T-box family member-dependent gene expression. The chain is Lysine-specific demethylase 6A (KDM6A) from Homo sapiens (Human).